The sequence spans 98 residues: MALTKAEMSEHLFEKLGLSKRDAKDLVELFFEEVRRALENGEQVKLSGFGNFDLRDKNQRPGRNPKTGEDIPITARRVVTFRPGQKLKSRVENASPKE.

The segment at 49-70 (FGNFDLRDKNQRPGRNPKTGED) is disordered.

The protein belongs to the bacterial histone-like protein family. Heterodimer of an alpha and a beta chain.

This protein is one of the two subunits of integration host factor, a specific DNA-binding protein that functions in genetic recombination as well as in transcriptional and translational control. This is Integration host factor subunit alpha from Serratia proteamaculans (strain 568).